Reading from the N-terminus, the 1137-residue chain is Eukaryotic translation initiation factor 3 subunit A (1137 aa).

In terms of domain architecture, PCI spans 319–501 (LQRMAAHVLL…NSIYFGTDLT (183 aa)). Composition is skewed to basic and acidic residues over residues 588 to 623 (QNNA…EERE) and 829 to 899 (AAEE…RGGD). Disordered stretches follow at residues 588–631 (QNNA…QNEI) and 829–1137 (AAEE…VKRR). Position 908 is a phosphoserine (Ser-908). Composition is skewed to basic and acidic residues over residues 922-971 (RGIE…EPDS), 985-1046 (SRDE…EPQR), 1054-1083 (DAPR…RGDQ), and 1106-1127 (AREE…KAAD).

This sequence belongs to the eIF-3 subunit A family. In terms of assembly, component of the eukaryotic translation initiation factor 3 (eIF-3) complex. The eIF-3 complex interacts with pix.

The protein resides in the cytoplasm. Its function is as follows. RNA-binding component of the eukaryotic translation initiation factor 3 (eIF-3) complex, which is involved in protein synthesis of a specialized repertoire of mRNAs and, together with other initiation factors, stimulates binding of mRNA and methionyl-tRNAi to the 40S ribosome. The eIF-3 complex specifically targets and initiates translation of a subset of mRNAs involved in cell proliferation. This is Eukaryotic translation initiation factor 3 subunit A from Drosophila yakuba (Fruit fly).